The following is a 397-amino-acid chain: Tryptophan synthase beta chain (397 aa).

Position 86 is an N6-(pyridoxal phosphate)lysine (K86).

It belongs to the TrpB family. As to quaternary structure, tetramer of two alpha and two beta chains. The cofactor is pyridoxal 5'-phosphate.

The catalysed reaction is (1S,2R)-1-C-(indol-3-yl)glycerol 3-phosphate + L-serine = D-glyceraldehyde 3-phosphate + L-tryptophan + H2O. It participates in amino-acid biosynthesis; L-tryptophan biosynthesis; L-tryptophan from chorismate: step 5/5. In terms of biological role, the beta subunit is responsible for the synthesis of L-tryptophan from indole and L-serine. This is Tryptophan synthase beta chain from Aeromonas hydrophila subsp. hydrophila (strain ATCC 7966 / DSM 30187 / BCRC 13018 / CCUG 14551 / JCM 1027 / KCTC 2358 / NCIMB 9240 / NCTC 8049).